We begin with the raw amino-acid sequence, 429 residues long: ATP-sensitive inward rectifier potassium channel 12 (429 aa).

The Cytoplasmic segment spans residues 1-76; the sequence is MTAGRVNPYS…IADMFTTCVD (76 aa). A helical membrane pass occupies residues 77 to 103; that stretch reads IRWRYMLLLFSLAFLVSWLLFGLIFWL. The a 1,2-diacyl-sn-glycero-3-phospho-(1D-myo-inositol-4,5-bisphosphate) site is built by Arg-78 and Arg-80. Residues 104 to 129 are Extracellular-facing; the sequence is IALIHGDLENPGGDDTFKPCVLQVNG. Cys-123 and Cys-155 are oxidised to a cystine. An intramembrane region (helical; Pore-forming) is located at residues 130–146; that stretch reads FVAAFLFSIETQTTIGY. 4 residues coordinate K(+): Thr-143, Ile-144, Gly-145, and Tyr-146. Positions 143–148 match the Selectivity filter motif; sequence TIGYGF. Topologically, residues 147–155 are extracellular; sequence GFRCVTEEC. Residues 156 to 183 form a helical membrane-spanning segment; it reads PLAVFMVVVQSIVGCIIDSFMIGAIMAK. Lys-183 and Lys-188 together coordinate a 1,2-diacyl-sn-glycero-3-phospho-(1D-myo-inositol-4,5-bisphosphate). Topologically, residues 184–429 are cytoplasmic; that stretch reads MARPKKRAQT…QRSYRRESEI (246 aa). Residues 386–407 form a disordered region; the sequence is RDEDEEDDDSRGLDDLSPDNRH. Basic and acidic residues predominate over residues 395 to 407; it reads SRGLDDLSPDNRH.

It belongs to the inward rectifier-type potassium channel family. Homotetramer.

Its subcellular location is the membrane. The protein resides in the cell membrane. It is found in the sarcolemma. The protein localises to the T-tubule. The catalysed reaction is K(+)(in) = K(+)(out). Activated by phosphatidylinositol 4,5-bisphosphate (PtdIns(4,5)P2). PtdIns(4,5)P2 binding to the cytoplasmic side of the channel triggers a conformation change leading to channel opening. Its function is as follows. Inward rectifying potassium channel that probably participates in controlling the resting membrane potential in electrically excitable cells. Probably participates in establishing action potential waveform and excitability of neuronal and muscle tissues. Inward rectifier potassium channels are characterized by a greater tendency to allow potassium to flow into the cell rather than out of it. Their voltage dependence is regulated by the concentration of extracellular potassium; as external potassium is raised, the voltage range of the channel opening shifts to more positive voltages. The inward rectification is mainly due to the blockage of outward current by internal magnesium. The protein is ATP-sensitive inward rectifier potassium channel 12 (KCNJ12) of Gallus gallus (Chicken).